Consider the following 307-residue polypeptide: MIQSHVSVMLNKMLEALSPKAGESYLDCTFGAGGYSKAILESCNCYVTALDRDPNVIKRAEEIQQNYGERFDFVETNFAGSFAKLKEKKFDGIVLDLGVSSMQLDIADRGFSFLHDGPLDMRMSGQGLSAEEFVNAAEAKELADVIYKYGDESFSRRIAKRIVEYRKTARIDSTGKLAEIVRSSIGFRKGKIDPATKTFQAIRIYVNDELGELEQFLVNVKNILKKDGRLVVVSFHSLEDRIVKNFFKENSEKPVVRSKYAKDDMTIDPNKWLKIITNKALAPSDKEVGLNIRARSAKLRAAKAIYE.

S-adenosyl-L-methionine-binding positions include 33–35, D51, F82, D96, and Q103; that span reads GGY.

Belongs to the methyltransferase superfamily. RsmH family.

The protein localises to the cytoplasm. It carries out the reaction cytidine(1402) in 16S rRNA + S-adenosyl-L-methionine = N(4)-methylcytidine(1402) in 16S rRNA + S-adenosyl-L-homocysteine + H(+). Specifically methylates the N4 position of cytidine in position 1402 (C1402) of 16S rRNA. The protein is Ribosomal RNA small subunit methyltransferase H of Rickettsia peacockii (strain Rustic).